The sequence spans 215 residues: Leucyl/phenylalanyl-tRNA--protein transferase (215 aa).

This sequence belongs to the L/F-transferase family.

It localises to the cytoplasm. It catalyses the reaction N-terminal L-lysyl-[protein] + L-leucyl-tRNA(Leu) = N-terminal L-leucyl-L-lysyl-[protein] + tRNA(Leu) + H(+). It carries out the reaction N-terminal L-arginyl-[protein] + L-leucyl-tRNA(Leu) = N-terminal L-leucyl-L-arginyl-[protein] + tRNA(Leu) + H(+). The catalysed reaction is L-phenylalanyl-tRNA(Phe) + an N-terminal L-alpha-aminoacyl-[protein] = an N-terminal L-phenylalanyl-L-alpha-aminoacyl-[protein] + tRNA(Phe). In terms of biological role, functions in the N-end rule pathway of protein degradation where it conjugates Leu, Phe and, less efficiently, Met from aminoacyl-tRNAs to the N-termini of proteins containing an N-terminal arginine or lysine. This Campylobacter jejuni subsp. jejuni serotype O:2 (strain ATCC 700819 / NCTC 11168) protein is Leucyl/phenylalanyl-tRNA--protein transferase.